The sequence spans 320 residues: Very-long-chain 3-oxoacyl-CoA reductase (320 aa).

A helical transmembrane segment spans residues 17-37 (FWYLGVVAAVWWGLRAAWCLL). 56-85 (GKWAVVTGATDGIGKAYAEELAKRGMNIVL) is a binding site for NADP(+). Transmembrane regions (helical) follow at residues 189-209 (GVIL…LTVY) and 283-303 (AIMG…SLGM). Ser-196 is a substrate binding site. Tyr-209 (proton acceptor) is an active-site residue.

The protein belongs to the short-chain dehydrogenases/reductases (SDR) family. 17-beta-HSD 3 subfamily.

It is found in the endoplasmic reticulum membrane. The catalysed reaction is a very-long-chain (3R)-3-hydroxyacyl-CoA + NADP(+) = a very-long-chain 3-oxoacyl-CoA + NADPH + H(+). It catalyses the reaction 17beta-estradiol + NAD(+) = estrone + NADH + H(+). The enzyme catalyses 17beta-estradiol + NADP(+) = estrone + NADPH + H(+). It carries out the reaction 3-oxooctadecanoyl-CoA + NADPH + H(+) = (3R)-hydroxyoctadecanoyl-CoA + NADP(+). The catalysed reaction is (7Z,10Z,13Z,16Z)-3-oxodocosatetraenoyl-CoA + NADPH + H(+) = (3R)-hydroxy-(7Z,10Z,13Z,16Z)-docosatetraenoyl-CoA + NADP(+). It catalyses the reaction 3-oxo-(7Z,10Z,13Z,16Z,19Z)-docosapentaenoyl-CoA + NADPH + H(+) = (3R)-hydroxy-(7Z,10Z,13Z,16Z,19Z)-docosapentaenoyl-CoA + NADP(+). The enzyme catalyses (8Z,11Z,14Z)-3-oxoeicosatrienoyl-CoA + NADPH + H(+) = (3R)-hydroxy-(8Z,11Z,14Z)-eicosatrienoyl-CoA + NADP(+). It participates in lipid metabolism; fatty acid biosynthesis. Its pathway is steroid biosynthesis; estrogen biosynthesis. Its function is as follows. Catalyzes the second of the four reactions of the long-chain fatty acids elongation cycle. This endoplasmic reticulum-bound enzymatic process, allows the addition of two carbons to the chain of long- and very long-chain fatty acids/VLCFAs per cycle. This enzyme has a 3-ketoacyl-CoA reductase activity, reducing 3-ketoacyl-CoA to 3-hydroxyacyl-CoA, within each cycle of fatty acid elongation. Thereby, it may participate in the production of VLCFAs of different chain lengths that are involved in multiple biological processes as precursors of membrane lipids and lipid mediators. May also catalyze the transformation of estrone (E1) into estradiol (E2) and play a role in estrogen formation. The chain is Very-long-chain 3-oxoacyl-CoA reductase (hsd17b12) from Xenopus tropicalis (Western clawed frog).